The sequence spans 195 residues: Large ribosomal subunit protein uL5 (195 aa).

This sequence belongs to the universal ribosomal protein uL5 family. As to quaternary structure, part of the 50S ribosomal subunit; part of the 5S rRNA/L5/L18/L25 subcomplex. Contacts the 5S rRNA and the P site tRNA. Forms a bridge to the 30S subunit in the 70S ribosome.

Its function is as follows. This is one of the proteins that bind and probably mediate the attachment of the 5S RNA into the large ribosomal subunit, where it forms part of the central protuberance. In the 70S ribosome it contacts protein S13 of the 30S subunit (bridge B1b), connecting the 2 subunits; this bridge is implicated in subunit movement. Contacts the P site tRNA; the 5S rRNA and some of its associated proteins might help stabilize positioning of ribosome-bound tRNAs. The chain is Large ribosomal subunit protein uL5 from Chlorobium chlorochromatii (strain CaD3).